A 424-amino-acid chain; its full sequence is MKKLLFAIPLVVPFYSHSAETVESCLAKPHTENSFTNVWKDDKTLDRYANYEGCLWNATGVVVCTGDETQCYGTWVPIGLAIPENEGGGSEGGGSEGGGSEGGGTKPPEYGDTPIPGYTYINPLDGTYPPGTEQNPANPNPSLEESQPLNTFMFQNNRFRNRQGALTVYTGTVTQGTDPVKTYYQYTPVSSKAMYDAYWNGKFRDCAFHSGFNEDPFVCEYQGQSSDLPQPPVNAGGGSGGGSGGGSEGGGSEGGGSEGGGSEGGGSGGGSGSGDFDYEKMANANKGAMTENADENALQSDAKGKLDSVATDYGAAIDGFIGDVSGLANGNGATGDFAGSNSQMAQVGDGDNSPLMNNFRQYLPSLPQSVECRPFVFGAGKPYEFSIDCDKINLFRGVFAFLLYVATFMYVFSTFANILRNKES.

Residues 1 to 18 (MKKLLFAIPLVVPFYSHS) form the signal peptide. An N1 region spans residues 19 to 85 (AETVESCLAK…VPIGLAIPEN (67 aa)). 2 disulfides stabilise this stretch: Cys25/Cys54 and Cys64/Cys71. The interval 83–147 (PENEGGGSEG…NPNPSLEESQ (65 aa)) is disordered. The G1 (Gly-rich linker) stretch occupies residues 86 to 104 (EGGGSEGGGSEGGGSEGGG). Residues 86 to 105 (EGGGSEGGGSEGGGSEGGGT) show a composition bias toward gly residues. The interval 105–141 (TKPPEYGDTPIPGYTYINPLDGTYPPGTEQNPANPNP) is hinge. Polar residues predominate over residues 132 to 147 (TEQNPANPNPSLEESQ). Residues 142–228 (SLEESQPLNT…CEYQGQSSDL (87 aa)) are N2. A disulfide bridge links Cys206 with Cys219. Residues 222–279 (QGQSSDLPQPPVNAGGGSGGGSGGGSEGGGSEGGGSEGGGSEGGGSGGGSGSGDFDYE) are disordered. Positions 235–273 (AGGGSGGGSGGGSEGGGSEGGGSEGGGSEGGGSGGGSGS) are enriched in gly residues. The segment at 236–274 (GGGSGGGSGGGSEGGGSEGGGSEGGGSEGGGSGGGSGSG) is G2 (Gly-rich linker). Residues 253-262 (EGGGSEGGGS) are not essential for gene 3 function. The CT stretch occupies residues 275-424 (DFDYEKMANA…FANILRNKES (150 aa)). The chain crosses the membrane as a helical span at residues 398–418 (VFAFLLYVATFMYVFSTFANI).

This sequence belongs to the inovirus G3P protein family. Interacts with G6P; this interaction is required for proper integration of G3P and G6P into the virion. Interacts with G8P. Interacts with the tip of the host pilus. Interacts (via N-terminus) with host TolA. Interacts (via transmembrane domain) with host TolQ (via 2nd and 3rd transmembrane domains); this interaction allows the phage translocation across the host inner membrane. Interacts (via transmembrane domain) with host TolR (via transmembrane domain); this interaction allows the phage translocation across the host inner membrane.

It localises to the virion. It is found in the host membrane. Plays essential roles both in the penetration of the viral genome into the bacterial host via pilus retraction and in the extrusion process. During the initial step of infection, G3P mediates adsorption of the phage to its primary receptor, the tip of host F-pilus. Attachment of the phage causes pilus retraction bringing the viral particle into close proximity of the host cell inner membrane. Binding to the host pilus initiates a change in the G3P conformation, allowing subsequent interaction with the host entry receptors tolA, TolQ and TolR and penetration of the viral DNA into the host cytoplasm. In the extrusion process, G3P mediates the release of the membrane-anchored virion from the cell via its C-terminal domain. This is Attachment protein G3P (III) from Enterobacteria phage f1 (Bacteriophage f1).